The chain runs to 193 residues: E3 ubiquitin-protein ligase RMA2 (193 aa).

An RING-type zinc finger spans residues 21–75 (CNICLDQVRDPVVTLCGHLFCWPCIHKWTYASNNSRQRVDQYDHKREPPKCPVCK). Residues 175-192 (LSRVYLFLLCFMFMCLFL) form a helical; Anchor for type IV membrane protein membrane-spanning segment.

Interacts with ERABP1. Barely detected in roots and limited to the root tips. Expressed in leaf hydathodes and in siliques.

The protein localises to the endoplasmic reticulum membrane. It carries out the reaction S-ubiquitinyl-[E2 ubiquitin-conjugating enzyme]-L-cysteine + [acceptor protein]-L-lysine = [E2 ubiquitin-conjugating enzyme]-L-cysteine + N(6)-ubiquitinyl-[acceptor protein]-L-lysine.. Its pathway is protein modification; protein ubiquitination. Functionally, E3 ubiquitin-protein ligase that promotes the ubiquitination and proteasomal degradation of the auxin-binding protein ERABP1. The sequence is that of E3 ubiquitin-protein ligase RMA2 (RMA2) from Arabidopsis thaliana (Mouse-ear cress).